The following is a 474-amino-acid chain: Aspartyl/glutamyl-tRNA(Asn/Gln) amidotransferase subunit B (474 aa).

The protein belongs to the GatB/GatE family. GatB subfamily. As to quaternary structure, heterotrimer of A, B and C subunits.

It carries out the reaction L-glutamyl-tRNA(Gln) + L-glutamine + ATP + H2O = L-glutaminyl-tRNA(Gln) + L-glutamate + ADP + phosphate + H(+). The catalysed reaction is L-aspartyl-tRNA(Asn) + L-glutamine + ATP + H2O = L-asparaginyl-tRNA(Asn) + L-glutamate + ADP + phosphate + 2 H(+). Allows the formation of correctly charged Asn-tRNA(Asn) or Gln-tRNA(Gln) through the transamidation of misacylated Asp-tRNA(Asn) or Glu-tRNA(Gln) in organisms which lack either or both of asparaginyl-tRNA or glutaminyl-tRNA synthetases. The reaction takes place in the presence of glutamine and ATP through an activated phospho-Asp-tRNA(Asn) or phospho-Glu-tRNA(Gln). The sequence is that of Aspartyl/glutamyl-tRNA(Asn/Gln) amidotransferase subunit B from Limosilactobacillus fermentum (strain NBRC 3956 / LMG 18251) (Lactobacillus fermentum).